The chain runs to 460 residues: Cysteine--tRNA ligase (460 aa).

Cys28 lines the Zn(2+) pocket. The 'HIGH' region motif lies at 30 to 40 (VTIYDLCHIGH). Positions 209, 234, and 238 each coordinate Zn(2+). Residues 266 to 270 (KMSKS) carry the 'KMSKS' region motif. Residue Lys269 coordinates ATP.

Belongs to the class-I aminoacyl-tRNA synthetase family. In terms of assembly, monomer. The cofactor is Zn(2+).

Its subcellular location is the cytoplasm. The catalysed reaction is tRNA(Cys) + L-cysteine + ATP = L-cysteinyl-tRNA(Cys) + AMP + diphosphate. The sequence is that of Cysteine--tRNA ligase from Shewanella frigidimarina (strain NCIMB 400).